The primary structure comprises 254 residues: Arginine/ornithine transport ATP-binding protein AotP (254 aa).

The region spanning 4–249 is the ABC transporter domain; it reads LEVQDLHKRY…PQSDRLKQFL (246 aa). Residue 36–43 coordinates ATP; that stretch reads GSSGSGKS.

Belongs to the ABC transporter superfamily.

It localises to the cell inner membrane. Its function is as follows. Part of the arginine-inducible binding-protein-dependent transport system for arginine and ornithine. Probably responsible for energy coupling to the transport system. This Pseudomonas aeruginosa (strain ATCC 15692 / DSM 22644 / CIP 104116 / JCM 14847 / LMG 12228 / 1C / PRS 101 / PAO1) protein is Arginine/ornithine transport ATP-binding protein AotP (aotP).